The sequence spans 315 residues: Methionyl-tRNA formyltransferase (315 aa).

(6S)-5,6,7,8-tetrahydrofolate is bound at residue 112–115 (SLLP).

This sequence belongs to the Fmt family.

The enzyme catalyses L-methionyl-tRNA(fMet) + (6R)-10-formyltetrahydrofolate = N-formyl-L-methionyl-tRNA(fMet) + (6S)-5,6,7,8-tetrahydrofolate + H(+). Its function is as follows. Attaches a formyl group to the free amino group of methionyl-tRNA(fMet). The formyl group appears to play a dual role in the initiator identity of N-formylmethionyl-tRNA by promoting its recognition by IF2 and preventing the misappropriation of this tRNA by the elongation apparatus. This is Methionyl-tRNA formyltransferase from Leptospira borgpetersenii serovar Hardjo-bovis (strain JB197).